The primary structure comprises 123 residues: MALNIEEIIASVKEATVLELNDLVKAIEEEFGVTAAAPVAVAGGAAAGGAAEEKTEFDLVLAGAGDQKIKVIKVVREITGLGLKEAKELVDNTPKPLKEGIAKEEAEELKAKLEEVGASVEVK.

Belongs to the bacterial ribosomal protein bL12 family. In terms of assembly, homodimer. Part of the ribosomal stalk of the 50S ribosomal subunit. Forms a multimeric L10(L12)X complex, where L10 forms an elongated spine to which 2 to 4 L12 dimers bind in a sequential fashion. Binds GTP-bound translation factors.

Forms part of the ribosomal stalk which helps the ribosome interact with GTP-bound translation factors. Is thus essential for accurate translation. In Bacillus licheniformis (strain ATCC 14580 / DSM 13 / JCM 2505 / CCUG 7422 / NBRC 12200 / NCIMB 9375 / NCTC 10341 / NRRL NRS-1264 / Gibson 46), this protein is Large ribosomal subunit protein bL12.